Here is a 408-residue protein sequence, read N- to C-terminus: WD repeat-containing protein JIP5 (408 aa).

WD repeat units follow at residues 5–44, 50–86, 87–130, 133–172, 177–216, and 221–267; these read PVGSQIFDVVFHPSSAIAYTGLLNGHIKAFAYGEQGDSHN, PSKRSCRGLSLNGDGSKLYAVGKSKALHIVDTTTTDI, DARS…SVKT, QHFDYISDFLWLDDKKQLVATSGDGTLSVMDVRAKEPKVV, DQEDDLLSIVAIKSAQKILVGTQLGILSVFNRKKGWGDCV, and GHPL…FLGV. Residues 311-408 are disordered; sequence VDSDEEEDDE…VIDKDFFDGL (98 aa). 2 stretches are compositionally biased toward acidic residues: residues 313-339 and 356-366; these read SDEEEDDEEEWGGIEGADGSEGEEDEE and DESDDEDEEME. A compositionally biased stretch (basic and acidic residues) spans 396–408; that stretch reads KETVIDKDFFDGL.

This sequence belongs to the WD repeat WDR55 family.

It localises to the nucleus. The protein localises to the nucleolus. The protein is WD repeat-containing protein JIP5 (JIP5) of Coprinopsis cinerea (strain Okayama-7 / 130 / ATCC MYA-4618 / FGSC 9003) (Inky cap fungus).